The sequence spans 240 residues: Triosephosphate isomerase (240 aa).

A substrate-binding site is contributed by 6 to 8; it reads NLK. Histidine 88 (electrophile) is an active-site residue. The active-site Proton acceptor is glutamate 157. Residues glycine 163 and serine 193 each contribute to the substrate site.

It belongs to the triosephosphate isomerase family. In terms of assembly, homodimer.

It is found in the cytoplasm. It carries out the reaction D-glyceraldehyde 3-phosphate = dihydroxyacetone phosphate. It functions in the pathway carbohydrate biosynthesis; gluconeogenesis. Its pathway is carbohydrate degradation; glycolysis; D-glyceraldehyde 3-phosphate from glycerone phosphate: step 1/1. Its function is as follows. Involved in the gluconeogenesis. Catalyzes stereospecifically the conversion of dihydroxyacetone phosphate (DHAP) to D-glyceraldehyde-3-phosphate (G3P). This Sulfurimonas denitrificans (strain ATCC 33889 / DSM 1251) (Thiomicrospira denitrificans (strain ATCC 33889 / DSM 1251)) protein is Triosephosphate isomerase.